Reading from the N-terminus, the 281-residue chain is Large ribosomal subunit protein uL2 (281 aa).

Residues 208–281 (AGRSRYAGQR…RGRKRGPHTR (74 aa)) form a disordered region. Basic residues predominate over residues 254–281 (TVGKKTRSHKARSNKFIVRGRKRGPHTR).

This sequence belongs to the universal ribosomal protein uL2 family. Part of the 50S ribosomal subunit. Forms a bridge to the 30S subunit in the 70S ribosome.

One of the primary rRNA binding proteins. Required for association of the 30S and 50S subunits to form the 70S ribosome, for tRNA binding and peptide bond formation. It has been suggested to have peptidyltransferase activity; this is somewhat controversial. Makes several contacts with the 16S rRNA in the 70S ribosome. The polypeptide is Large ribosomal subunit protein uL2 (Limosilactobacillus fermentum (strain NBRC 3956 / LMG 18251) (Lactobacillus fermentum)).